We begin with the raw amino-acid sequence, 119 residues long: Circadian clock oscillator protein KaiB (119 aa).

It belongs to the KaiB family. May undergo a major conformational rearrangment; in the free state forms homooligomers. When bound to KaiC switches to a monomeric thioredoxin-fold (KaiB(fs)). The active oscillator complex is probably KaiC(6):KaiB(6).

Functionally, component of the KaiBC clock protein complex, which constitutes the main circadian regulator in cyanobacteria; it may modify the ATPase activity of KaiC. In terms of biological role, may be a metamorphic protein which reversibly switches between an inactive tetrameric fold and a rare, thioredoxin-like monomeric fold (KaiB(fs)). KaiB(fs) binds phospho-KaiC, and perhaps clock output effectors. In Prochlorococcus marinus (strain MIT 9303), this protein is Circadian clock oscillator protein KaiB.